We begin with the raw amino-acid sequence, 235 residues long: Peroxynitrite isomerase 2 (235 aa).

A GXWXGXG motif is present at residues 82-88 (GVWRGEG). Heme b is bound by residues lysine 198 and histidine 225.

This sequence belongs to the nitrobindin family. Homodimer. It depends on heme b as a cofactor.

It carries out the reaction peroxynitrite = nitrate. It participates in nitrogen metabolism. Heme-binding protein able to scavenge peroxynitrite and to protect free L-tyrosine against peroxynitrite-mediated nitration, by acting as a peroxynitrite isomerase that converts peroxynitrite to nitrate. Therefore, this protein likely plays a role in peroxynitrite sensing and in the detoxification of reactive nitrogen and oxygen species (RNS and ROS, respectively). Is able to bind nitric oxide (NO) in vitro, but may act as a sensor of peroxynitrite levels in vivo. This chain is Peroxynitrite isomerase 2, found in Mycolicibacterium paratuberculosis (strain ATCC BAA-968 / K-10) (Mycobacterium paratuberculosis).